Consider the following 504-residue polypeptide: UDP-glycosyltransferase UGT4 (504 aa).

The first 23 residues, 1–23, serve as a signal peptide directing secretion; that stretch reads MTLLRDLLLLYINSLLFINPSIG. The Lumenal portion of the chain corresponds to 24–474; the sequence is ENILVFLPTK…SAVIDLYWFQ (451 aa). Asn-54, Asn-66, Asn-69, and Asn-422 each carry an N-linked (GlcNAc...) asparagine glycan. The helical transmembrane segment at 475–495 threads the bilayer; sequence YILLDIILFYSLIVLILLCIL. The Cytoplasmic segment spans residues 496–504; that stretch reads RIFFRMLTK.

Belongs to the UDP-glycosyltransferase family.

It is found in the microsome membrane. Its function is as follows. Catalyzes the transfer of a glycosyl group from a UDP-sugar to an acceptor molecule. This Dactylopius coccus (Cochineal) protein is UDP-glycosyltransferase UGT4.